The following is an 82-amino-acid chain: Cytochrome b559 subunit alpha (82 aa).

The helical transmembrane segment at Ile22–Phe36 threads the bilayer. His24 contributes to the heme binding site.

The protein belongs to the PsbE/PsbF family. As to quaternary structure, heterodimer of an alpha subunit and a beta subunit. PSII is composed of 1 copy each of membrane proteins PsbA, PsbB, PsbC, PsbD, PsbE, PsbF, PsbH, PsbI, PsbJ, PsbK, PsbL, PsbM, PsbT, PsbX, PsbY, Psb30/Ycf12, peripheral proteins PsbO, CyanoQ (PsbQ), PsbU, PsbV and a large number of cofactors. It forms dimeric complexes. Heme b is required as a cofactor.

The protein resides in the cellular thylakoid membrane. In terms of biological role, this b-type cytochrome is tightly associated with the reaction center of photosystem II (PSII). PSII is a light-driven water:plastoquinone oxidoreductase that uses light energy to abstract electrons from H(2)O, generating O(2) and a proton gradient subsequently used for ATP formation. It consists of a core antenna complex that captures photons, and an electron transfer chain that converts photonic excitation into a charge separation. This chain is Cytochrome b559 subunit alpha, found in Prochlorococcus marinus (strain MIT 9211).